The primary structure comprises 648 residues: Transketolase (648 aa).

Histidine 22 serves as a coordination point for substrate. Thiamine diphosphate-binding positions include histidine 62 and 109–111 (GPL). Aspartate 150 contributes to the Mg(2+) binding site. Thiamine diphosphate-binding residues include glycine 151 and asparagine 180. The Mg(2+) site is built by asparagine 180 and valine 182. Histidine 252, arginine 345, and serine 372 together coordinate substrate. Histidine 252 provides a ligand contact to thiamine diphosphate. Glutamate 397 serves as the catalytic Proton donor. Phenylalanine 423 is a thiamine diphosphate binding site. Residues histidine 447, aspartate 455, and arginine 506 each coordinate substrate.

Belongs to the transketolase family. Homodimer. Mg(2+) serves as cofactor. The cofactor is Ca(2+). Requires Mn(2+) as cofactor. Co(2+) is required as a cofactor. It depends on thiamine diphosphate as a cofactor.

The enzyme catalyses D-sedoheptulose 7-phosphate + D-glyceraldehyde 3-phosphate = aldehydo-D-ribose 5-phosphate + D-xylulose 5-phosphate. Functionally, catalyzes the transfer of a two-carbon ketol group from a ketose donor to an aldose acceptor, via a covalent intermediate with the cofactor thiamine pyrophosphate. The polypeptide is Transketolase (tkt) (Mycoplasma genitalium (strain ATCC 33530 / DSM 19775 / NCTC 10195 / G37) (Mycoplasmoides genitalium)).